A 151-amino-acid chain; its full sequence is Succinate dehydrogenase subunit 4, mitochondrial (151 aa).

A mitochondrion-targeting transit peptide spans Met1 to Ser78. Residue His109 coordinates heme. Tyr121 serves as a coordination point for a ubiquinone. The helical transmembrane segment at Leu130–Leu150 threads the bilayer.

Component of complex II composed of eight subunits in plants: four classical SDH subunits SDH1, SDH2, SDH3 and SDH4 (a flavoprotein (FP), an iron-sulfur protein (IP), and a cytochrome b composed of a large and a small subunit.), as well as four subunits unknown in mitochondria from bacteria and heterotrophic eukaryotes. It depends on heme as a cofactor. As to expression, expressed in flowers, inflorescences and stems.

The protein localises to the mitochondrion inner membrane. Its pathway is carbohydrate metabolism; tricarboxylic acid cycle. Its function is as follows. Membrane-anchoring subunit of succinate dehydrogenase (SDH). This chain is Succinate dehydrogenase subunit 4, mitochondrial, found in Arabidopsis thaliana (Mouse-ear cress).